Here is a 417-residue protein sequence, read N- to C-terminus: Gamma-glutamyl phosphate reductase (417 aa).

It belongs to the gamma-glutamyl phosphate reductase family.

Its subcellular location is the cytoplasm. It carries out the reaction L-glutamate 5-semialdehyde + phosphate + NADP(+) = L-glutamyl 5-phosphate + NADPH + H(+). Its pathway is amino-acid biosynthesis; L-proline biosynthesis; L-glutamate 5-semialdehyde from L-glutamate: step 2/2. Catalyzes the NADPH-dependent reduction of L-glutamate 5-phosphate into L-glutamate 5-semialdehyde and phosphate. The product spontaneously undergoes cyclization to form 1-pyrroline-5-carboxylate. The chain is Gamma-glutamyl phosphate reductase from Serratia proteamaculans (strain 568).